We begin with the raw amino-acid sequence, 686 residues long: Glycine--tRNA ligase beta subunit (686 aa).

The protein belongs to the class-II aminoacyl-tRNA synthetase family. Tetramer of two alpha and two beta subunits.

The protein resides in the cytoplasm. It carries out the reaction tRNA(Gly) + glycine + ATP = glycyl-tRNA(Gly) + AMP + diphosphate. The polypeptide is Glycine--tRNA ligase beta subunit (Halothermothrix orenii (strain H 168 / OCM 544 / DSM 9562)).